The sequence spans 403 residues: Zinc metalloproteinase nas-8 (403 aa).

Positions 1–29 (MRRNDLLNNKITIFLSSLSLFVIIIPIYA) are cleaved as a signal peptide. Positions 30–111 (AEKDLLPPST…DPKNSESLRR (82 aa)) are excised as a propeptide. The Peptidase M12A domain occupies 112–307 (NGVITGTRKW…LKMNLMYQCS (196 aa)). 5 disulfides stabilise this stretch: Cys-154-Cys-306, Cys-176-Cys-195, Cys-338-Cys-372, Cys-345-Cys-365, and Cys-352-Cys-369. His-203 provides a ligand contact to Zn(2+). Residue Glu-204 is part of the active site. Positions 207 and 213 each coordinate Zn(2+). The region spanning 338–372 (CRDRTNLCWRWIDRCKSFFFEQIMKEFCSLSCGYC) is the ShKT domain. A glycan (N-linked (GlcNAc...) asparagine) is linked at Asn-386.

It depends on Zn(2+) as a cofactor.

It is found in the secreted. The catalysed reaction is Hydrolysis of peptide bonds in substrates containing five or more amino acids, preferentially with Ala in P1', and Pro in P2'.. Functionally, metalloprotease. In Caenorhabditis elegans, this protein is Zinc metalloproteinase nas-8 (nas-8).